We begin with the raw amino-acid sequence, 98 residues long: Small ribosomal subunit protein eS24 (98 aa).

A disordered region spans residues 76 to 98 (GRQRTERSYLLNRGEPKKEEEEA). The span at 89-98 (GEPKKEEEEA) shows a compositional bias: basic and acidic residues.

This sequence belongs to the eukaryotic ribosomal protein eS24 family.

This chain is Small ribosomal subunit protein eS24, found in Methanosphaerula palustris (strain ATCC BAA-1556 / DSM 19958 / E1-9c).